We begin with the raw amino-acid sequence, 137 residues long: Small ribosomal subunit protein bS6 (137 aa).

Positions 96–137 (ITEASPMAKAKDERDTRRSSEERAPRAEAAEEVEESAENTAE) are disordered. Over residues 104–124 (KAKDERDTRRSSEERAPRAEA) the composition is skewed to basic and acidic residues. Residues 125 to 137 (AEEVEESAENTAE) are compositionally biased toward acidic residues.

Belongs to the bacterial ribosomal protein bS6 family.

Its function is as follows. Binds together with bS18 to 16S ribosomal RNA. This Shewanella halifaxensis (strain HAW-EB4) protein is Small ribosomal subunit protein bS6.